A 226-amino-acid polypeptide reads, in one-letter code: Enolase-phosphatase E1 (226 aa).

This sequence belongs to the HAD-like hydrolase superfamily. MasA/MtnC family. In terms of assembly, monomer. It depends on Mg(2+) as a cofactor.

The enzyme catalyses 5-methylsulfanyl-2,3-dioxopentyl phosphate + H2O = 1,2-dihydroxy-5-(methylsulfanyl)pent-1-en-3-one + phosphate. It participates in amino-acid biosynthesis; L-methionine biosynthesis via salvage pathway; L-methionine from S-methyl-5-thio-alpha-D-ribose 1-phosphate: step 3/6. The protein operates within amino-acid biosynthesis; L-methionine biosynthesis via salvage pathway; L-methionine from S-methyl-5-thio-alpha-D-ribose 1-phosphate: step 4/6. Functionally, bifunctional enzyme that catalyzes the enolization of 2,3-diketo-5-methylthiopentyl-1-phosphate (DK-MTP-1-P) into the intermediate 2-hydroxy-3-keto-5-methylthiopentenyl-1-phosphate (HK-MTPenyl-1-P), which is then dephosphorylated to form the acireductone 1,2-dihydroxy-3-keto-5-methylthiopentene (DHK-MTPene). This Shewanella sp. (strain ANA-3) protein is Enolase-phosphatase E1.